Reading from the N-terminus, the 179-residue chain is UPF0398 protein Bsph_0756 (179 aa).

It belongs to the UPF0398 family.

The polypeptide is UPF0398 protein Bsph_0756 (Lysinibacillus sphaericus (strain C3-41)).